Here is a 430-residue protein sequence, read N- to C-terminus: Adenylosuccinate synthetase (430 aa).

GTP is bound by residues 11–17 (GDEGKGK) and 39–41 (GHT). The active-site Proton acceptor is D12. Residues D12 and G39 each contribute to the Mg(2+) site. Residues 12–15 (DEGK), 37–40 (NAGH), T130, R144, N226, T241, and R305 contribute to the IMP site. The Proton donor role is filled by H40. Residue 301–307 (VTTGRKR) participates in substrate binding. Residues R307, 333–335 (KLD), and 415–417 (GTG) each bind GTP.

Belongs to the adenylosuccinate synthetase family. As to quaternary structure, homodimer. The cofactor is Mg(2+).

The protein localises to the cytoplasm. The enzyme catalyses IMP + L-aspartate + GTP = N(6)-(1,2-dicarboxyethyl)-AMP + GDP + phosphate + 2 H(+). The protein operates within purine metabolism; AMP biosynthesis via de novo pathway; AMP from IMP: step 1/2. Plays an important role in the de novo pathway and in the salvage pathway of purine nucleotide biosynthesis. Catalyzes the first committed step in the biosynthesis of AMP from IMP. The polypeptide is Adenylosuccinate synthetase (Scheffersomyces stipitis (strain ATCC 58785 / CBS 6054 / NBRC 10063 / NRRL Y-11545) (Yeast)).